We begin with the raw amino-acid sequence, 196 residues long: Pyroglutamyl-peptidase 1-like protein (196 aa).

Catalysis depends on residues Glu-65, Cys-127, and His-146.

It belongs to the peptidase C15 family.

The polypeptide is Pyroglutamyl-peptidase 1-like protein (PGPEP1L) (Homo sapiens (Human)).